Consider the following 286-residue polypeptide: Pantothenate synthetase (286 aa).

ATP is bound at residue 30–37; sequence MGFLHEGH. His-37 acts as the Proton donor in catalysis. Gln-61 lines the (R)-pantoate pocket. Gln-61 is a binding site for beta-alanine. Residue 147 to 150 coordinates ATP; sequence GLKD. Gln-153 contributes to the (R)-pantoate binding site. ATP is bound by residues Val-176 and 184-187; that span reads KSSR.

It belongs to the pantothenate synthetase family. As to quaternary structure, homodimer.

Its subcellular location is the cytoplasm. It carries out the reaction (R)-pantoate + beta-alanine + ATP = (R)-pantothenate + AMP + diphosphate + H(+). It participates in cofactor biosynthesis; (R)-pantothenate biosynthesis; (R)-pantothenate from (R)-pantoate and beta-alanine: step 1/1. Its function is as follows. Catalyzes the condensation of pantoate with beta-alanine in an ATP-dependent reaction via a pantoyl-adenylate intermediate. This is Pantothenate synthetase from Bacillus subtilis (strain 168).